Consider the following 413-residue polypeptide: ATP-dependent RNA helicase RhlB (413 aa).

Residues 9-37 (QRFADLPLHPQILAALNDQNFEYCTPIQA) carry the Q motif motif. The Helicase ATP-binding domain maps to 40 to 217 (LPLTLQGKDV…FEDMNDPEYI (178 aa)). 53–60 (AQTGTGKT) contacts ATP. A DEAD box motif is present at residues 163–166 (DEAD). A Helicase C-terminal domain is found at 241 to 388 (KMALLMTLLE…VSQYDPDSLI (148 aa)).

It belongs to the DEAD box helicase family. RhlB subfamily. Component of the RNA degradosome, which is a multiprotein complex involved in RNA processing and mRNA degradation.

The protein resides in the cytoplasm. It carries out the reaction ATP + H2O = ADP + phosphate + H(+). Functionally, DEAD-box RNA helicase involved in RNA degradation. Has RNA-dependent ATPase activity and unwinds double-stranded RNA. This is ATP-dependent RNA helicase RhlB from Actinobacillus succinogenes (strain ATCC 55618 / DSM 22257 / CCUG 43843 / 130Z).